The sequence spans 338 residues: Ketol-acid reductoisomerase (NADP(+)) (338 aa).

Positions 1 to 181 (MQVYYDKDAD…GGGRAGVIET (181 aa)) constitute a KARI N-terminal Rossmann domain. NADP(+)-binding positions include 24-27 (YGSQ), Arg47, Ser50, Ser52, and 82-85 (DEHQ). Residue His107 is part of the active site. Residue Gly133 participates in NADP(+) binding. The KARI C-terminal knotted domain maps to 182 to 327 (SFKDETETDL…AKLRDMMPWI (146 aa)). 4 residues coordinate Mg(2+): Asp190, Glu194, Glu226, and Glu230. Ser251 contacts substrate.

The protein belongs to the ketol-acid reductoisomerase family. Mg(2+) is required as a cofactor.

It carries out the reaction (2R)-2,3-dihydroxy-3-methylbutanoate + NADP(+) = (2S)-2-acetolactate + NADPH + H(+). It catalyses the reaction (2R,3R)-2,3-dihydroxy-3-methylpentanoate + NADP(+) = (S)-2-ethyl-2-hydroxy-3-oxobutanoate + NADPH + H(+). It participates in amino-acid biosynthesis; L-isoleucine biosynthesis; L-isoleucine from 2-oxobutanoate: step 2/4. It functions in the pathway amino-acid biosynthesis; L-valine biosynthesis; L-valine from pyruvate: step 2/4. In terms of biological role, involved in the biosynthesis of branched-chain amino acids (BCAA). Catalyzes an alkyl-migration followed by a ketol-acid reduction of (S)-2-acetolactate (S2AL) to yield (R)-2,3-dihydroxy-isovalerate. In the isomerase reaction, S2AL is rearranged via a Mg-dependent methyl migration to produce 3-hydroxy-3-methyl-2-ketobutyrate (HMKB). In the reductase reaction, this 2-ketoacid undergoes a metal-dependent reduction by NADPH to yield (R)-2,3-dihydroxy-isovalerate. This Thioalkalivibrio sulfidiphilus (strain HL-EbGR7) protein is Ketol-acid reductoisomerase (NADP(+)).